Reading from the N-terminus, the 221-residue chain is Oxaloacetate tautomerase FAHD1, mitochondrial (221 aa).

Residues 1–24 constitute a mitochondrion transit peptide; it reads MAASRPLSRFWEWGKNIVCVGRNY. The residue at position 37 (Ser-37) is a Phosphoserine. Residues Glu-68, Glu-70, and Asp-99 each coordinate Mg(2+). Residue Lys-110 is modified to N6-acetyllysine. Lys-112 bears the N6-succinyllysine mark.

It belongs to the FAH family. In terms of assembly, homodimer. It depends on Mg(2+) as a cofactor. Mn(2+) serves as cofactor.

The protein localises to the mitochondrion. It localises to the cytoplasm. It is found in the cytosol. The catalysed reaction is oxaloacetate = enol-oxaloacetate. It catalyses the reaction oxaloacetate + H(+) = pyruvate + CO2. The enzyme catalyses a 3-acylpyruvate + H2O = a carboxylate + pyruvate + H(+). It carries out the reaction acetylpyruvate + H2O = acetate + pyruvate + H(+). The catalysed reaction is 3-fumarylpyruvate + H2O = fumarate + pyruvate + H(+). Oxaloacetate decarboxylation is competitively inhibited by oxalate. Functionally, tautomerase that converts enol-oxaloacetate, a strong inhibitor of succinate dehydrogenase, to the physiological keto form of oxaloacetate. It is thereby required to maximize aerobic respiration efficiency by preventing succinate dehydrogenase inhibition. Also acts as a weak oxaloacetate decarboxylase (ODx), catalyzing the decarboxylation of oxaloacetate (OAA) to pyruvate and CO(2), and as such is likely a regulatory enzyme in the TCA cycle. Also displays acylpyruvase activity, being able to hydrolyze acetylpyruvate and fumarylpyruvate in vitro. The polypeptide is Oxaloacetate tautomerase FAHD1, mitochondrial (FAHD1) (Pongo abelii (Sumatran orangutan)).